The primary structure comprises 250 residues: GILT-like protein 1 (250 aa).

The N-terminal stretch at 1–21 is a signal peptide; it reads MSHKIAAVCLLMSCLIATAYS. N157 carries N-linked (GlcNAc...) asparagine glycosylation.

Belongs to the GILT family. Conjugated to URM1, a ubiquitin-like protein.

It localises to the secreted. Involved in the immune response to bacterial infection. In Drosophila melanogaster (Fruit fly), this protein is GILT-like protein 1.